Reading from the N-terminus, the 419-residue chain is Phospho-N-acetylmuramoyl-pentapeptide-transferase (419 aa).

Transmembrane regions (helical) follow at residues 22–42, 72–92, 99–119, 135–155, 208–228, 238–258, 278–298, 303–323, 328–348, and 396–416; these read YVSFRSAVAIILALLLATVIG, TPTMGGLIIIISILIPTLLLA, ILLMIVTTLLLGSLGFLDDYI, IIGQVGLGFIIGIVLYMNPAV, VLFGWILFVCVAVVVVTFISN, GLATGSSAIIGVVLAIFAYVS, LTIFAFAFVGATIGFLWYNAY, FMGDTGSLTLGGIIAVFALII, LLPILCFVFIIEGLSVMIQVF, and KITVRFWLVGIIMAAITIATL.

It belongs to the glycosyltransferase 4 family. MraY subfamily. It depends on Mg(2+) as a cofactor.

The protein localises to the cell inner membrane. The enzyme catalyses UDP-N-acetyl-alpha-D-muramoyl-L-alanyl-gamma-D-glutamyl-meso-2,6-diaminopimeloyl-D-alanyl-D-alanine + di-trans,octa-cis-undecaprenyl phosphate = di-trans,octa-cis-undecaprenyl diphospho-N-acetyl-alpha-D-muramoyl-L-alanyl-D-glutamyl-meso-2,6-diaminopimeloyl-D-alanyl-D-alanine + UMP. It participates in cell wall biogenesis; peptidoglycan biosynthesis. Functionally, catalyzes the initial step of the lipid cycle reactions in the biosynthesis of the cell wall peptidoglycan: transfers peptidoglycan precursor phospho-MurNAc-pentapeptide from UDP-MurNAc-pentapeptide onto the lipid carrier undecaprenyl phosphate, yielding undecaprenyl-pyrophosphoryl-MurNAc-pentapeptide, known as lipid I. This Porphyromonas gingivalis (strain ATCC 33277 / DSM 20709 / CIP 103683 / JCM 12257 / NCTC 11834 / 2561) protein is Phospho-N-acetylmuramoyl-pentapeptide-transferase.